Here is a 409-residue protein sequence, read N- to C-terminus: Translation initiation factor 2 subunit gamma (409 aa).

The region spanning 6–203 (QPEVNIGLVG…AVQSEIPTPE (198 aa)) is the tr-type G domain. Residues 15 to 22 (GHVDHGKT) are G1. The Mg(2+) site is built by Asp-18, Thr-22, Gly-43, and Ser-45. 18–23 (DHGKTT) is a GTP binding site. Residues 43–47 (GISIR) are G2. The segment at 90–93 (DAPG) is G3. Residues 146–149 (NKVD) and 181–183 (SAG) contribute to the GTP site. The G4 stretch occupies residues 146-149 (NKVD). A G5 region spans residues 181–183 (SAG).

The protein belongs to the TRAFAC class translation factor GTPase superfamily. Classic translation factor GTPase family. EIF2G subfamily. As to quaternary structure, heterotrimer composed of an alpha, a beta and a gamma chain. It depends on Mg(2+) as a cofactor.

The catalysed reaction is GTP + H2O = GDP + phosphate + H(+). Its function is as follows. eIF-2 functions in the early steps of protein synthesis by forming a ternary complex with GTP and initiator tRNA. The chain is Translation initiation factor 2 subunit gamma from Haloarcula marismortui (strain ATCC 43049 / DSM 3752 / JCM 8966 / VKM B-1809) (Halobacterium marismortui).